The primary structure comprises 231 residues: NADH-ubiquinone oxidoreductase chain 4 (231 aa).

6 helical membrane passes run 1-21 (PIAG…YGII), 34-54 (LFLP…LTCL), 63-85 (IAYS…TPWG), 89-111 (AMAL…NTTY), 128-148 (ILPM…AIPP), and 156-176 (LLIM…LGLS).

This sequence belongs to the complex I subunit 4 family.

It localises to the mitochondrion membrane. It carries out the reaction a ubiquinone + NADH + 5 H(+)(in) = a ubiquinol + NAD(+) + 4 H(+)(out). Its function is as follows. Core subunit of the mitochondrial membrane respiratory chain NADH dehydrogenase (Complex I) that is believed to belong to the minimal assembly required for catalysis. Complex I functions in the transfer of electrons from NADH to the respiratory chain. The immediate electron acceptor for the enzyme is believed to be ubiquinone. This Crotalus concolor (Midget faded rattlesnake) protein is NADH-ubiquinone oxidoreductase chain 4 (MT-ND4).